The following is an 837-amino-acid chain: MAQALSEEEFQRMQTQLLELRTNNYQLSDELRKNGVELSSLRQKVAYLDKEFSKAQKALSKSKKAQEVEVLLSEKEMLQAKLHSQEEDFRLQNSTLMAEFSKLCSQLEQLELENRQLKEGVPGAAGPHVDGELLRLQAENTALQKNMAALQERYGKEAVRPSAVSEGQGDPPGDVLPISLSPMPLAEVELKWEMEREEKKLLWEQLQGLESSKQAETSRLQEELAKLSEKLKKKQESFCRLQTEKETLFNDSRNKIEELQQRKEADLKAQLARTQKLQQELEAANQSLAELRDQRQGERLEHAAALRALQDQVSSQSADAQEQVEGLLAENNALRTSLAALEQIQTAKTQELNMLREQNTELAAELKHRQADYEELMGQKDDLNSQLQESLRANSRLLEQLQEMGQEKEQLIQDLQEARKSAEKRKVMLDELAMETLQEKSQHKEELGAVRLRHEKEMLGVRARYERELRELHEDKKRQEEELRGQIREEKARTRELENLQHTVEELQAQVHSMDGAKGWFERRLKEAEESLLQQEQEQEETLKQCREQHAAELKGKEEELQNVRDQLQQAQEERDGHVKTISNLKQEVKDTVDGQRILEKKGSAVLKDLKRQLHLERKRADKLQERLQEILTNSKSRTGLEELVLSEMNSPSRTQTGDSSSVSSFSYREILKEKESSAIPARSLSSSPQAQPPRPAELSDEEVAELFQRLAETQQEKWMLEEKVKHLEVSSASMAEDLCRKSAIIETYVMDSRIDVSVAAGHTDRSGLGSVLRDLVKPGDENLREMNKKLQNMLEEQLTKNMHLHKDMEVLSQEIVRLSKECVGSPDPDLEPGEAN.

An N-acetylalanine modification is found at alanine 2. A coiled-coil region spans residues 4-158; it reads ALSEEEFQRM…ALQERYGKEA (155 aa). Disordered regions lie at residues 161-180, 555-577, 647-666, and 677-702; these read PSAVSEGQGDPPGDVLPISL, KGKEEELQNVRDQLQQAQEERDG, SEMNSPSRTQTGDSSSVSSF, and SSAIPARSLSSSPQAQPPRPAELSDE. The stretch at 204 to 637 forms a coiled coil; sequence EQLQGLESSK…LQEILTNSKS (434 aa). A compositionally biased stretch (polar residues) spans 648 to 666; the sequence is EMNSPSRTQTGDSSSVSSF. Phosphoserine is present on residues serine 651, serine 662, serine 664, serine 665, serine 684, serine 686, serine 687, and serine 688. Residues 678-690 show a composition bias toward low complexity; the sequence is SAIPARSLSSSPQ. Coiled-coil stretches lie at residues 697–731 and 781–810; these read AELSDEEVAELFQRLAETQQEKWMLEEKVKHLEVS and DENLREMNKKLQNMLEEQLTKNMHLHKDME. Serine 826 carries the post-translational modification Phosphoserine.

As to quaternary structure, interacts with GRIP1, GRIP2 and AMPA receptors. Interacts (via C-terminus) with MAPK8/JNK1 and with MAP3K1/MEKK1; the interaction promotes MAP3K1-mediated phosphorylation of MAPK8. Interacts (via N-terminus) with RAB4A (in GTP-bound form). Interacts (via C-terminus) with STX12. Proteolytically cleaved by caspase-3. A minor C-terminal proteolytic fragment of 30 kDa is produced. Proteolytic cleavage is required for JNK signaling activation. As to expression, expressed in the central nervous system; especially in neurons.

The protein localises to the early endosome membrane. The protein resides in the recycling endosome membrane. It localises to the cell projection. It is found in the axon. Its subcellular location is the dendrite. The protein localises to the synapse. Regulates the endosomal recycling back to the neuronal plasma membrane, possibly by connecting early and late recycling endosomal domains and promoting segregation of recycling endosomes from early endosomal membranes. Involved in the localization of recycling endosomes to dendritic spines, thereby playing a role in the maintenance of dendritic spine morphology. Required for the activity-induced AMPA receptor recycling to dendrite membranes and for long-term potentiation and synaptic plasticity. Its function is as follows. Functions as a scaffold protein in neurons to facilitate MAP3K1/MEKK1-mediated activation of the JNK1 kinase by phosphorylation, possibly by bringing MAP3K1/MEKK1 and JNK1 in close proximity. The polypeptide is GRIP1-associated protein 1 (Gripap1) (Rattus norvegicus (Rat)).